A 298-amino-acid chain; its full sequence is S-adenosylmethionine-dependent nucleotide dehydratase (298 aa).

Residues 8-235 form the Radical SAM core domain; it reads ANKELVVNWH…QRFGEIIYAE (228 aa). The [4Fe-4S] cluster site is built by Cys-22, Cys-26, and Cys-29.

This sequence belongs to the radical SAM superfamily. Viperin family. [4Fe-4S] cluster is required as a cofactor.

It catalyses the reaction CTP + AH2 + S-adenosyl-L-methionine = 3'-deoxy-3',4'-didehydro-CTP + 5'-deoxyadenosine + L-methionine + A + H2O + H(+). The enzyme catalyses UTP + AH2 + S-adenosyl-L-methionine = 3'-deoxy-3',4'-didehydro-UTP + 5'-deoxyadenosine + L-methionine + A + H2O + H(+). In terms of biological role, expression of pVip8 in E.coli (strain MG1655) confers resistance to phages lambda, P1, SECphi8 and T7. Prevents culture collapse upon infection with T7. Catalyzes the conversion of cytidine triphosphate (CTP) to 3'-deoxy-3',4'-didehydro-CTP (ddhCTP) and uridine triphosphate (UTP) to 3'-deoxy-3',4'-didehydro-UTP (ddhUTP), probably via a SAM-dependent radical mechanism. The modified nucleotides repress transcription from T7 RNA polymerase-directed genes (possibly by acting as chain terminators), strongly suggesting these nucleotides block viral polymerase transcription. The polypeptide is S-adenosylmethionine-dependent nucleotide dehydratase (Psychrobacter lutiphocae (strain DSM 21542 / CCUG 56590 / IMMIB L-1110)).